We begin with the raw amino-acid sequence, 300 residues long: Phosphatidylserine decarboxylase proenzyme (300 aa).

Residues Asp-117, His-173, and Ser-260 each act as charge relay system; for autoendoproteolytic cleavage activity in the active site. Ser-260 acts as the Schiff-base intermediate with substrate; via pyruvic acid; for decarboxylase activity in catalysis. Ser-260 bears the Pyruvic acid (Ser); by autocatalysis mark.

Belongs to the phosphatidylserine decarboxylase family. PSD-B subfamily. Prokaryotic type II sub-subfamily. As to quaternary structure, heterodimer of a large membrane-associated beta subunit and a small pyruvoyl-containing alpha subunit. The cofactor is pyruvate. In terms of processing, is synthesized initially as an inactive proenzyme. Formation of the active enzyme involves a self-maturation process in which the active site pyruvoyl group is generated from an internal serine residue via an autocatalytic post-translational modification. Two non-identical subunits are generated from the proenzyme in this reaction, and the pyruvate is formed at the N-terminus of the alpha chain, which is derived from the carboxyl end of the proenzyme. The autoendoproteolytic cleavage occurs by a canonical serine protease mechanism, in which the side chain hydroxyl group of the serine supplies its oxygen atom to form the C-terminus of the beta chain, while the remainder of the serine residue undergoes an oxidative deamination to produce ammonia and the pyruvoyl prosthetic group on the alpha chain. During this reaction, the Ser that is part of the protease active site of the proenzyme becomes the pyruvoyl prosthetic group, which constitutes an essential element of the active site of the mature decarboxylase.

It localises to the cell membrane. The enzyme catalyses a 1,2-diacyl-sn-glycero-3-phospho-L-serine + H(+) = a 1,2-diacyl-sn-glycero-3-phosphoethanolamine + CO2. It functions in the pathway phospholipid metabolism; phosphatidylethanolamine biosynthesis; phosphatidylethanolamine from CDP-diacylglycerol: step 2/2. In terms of biological role, catalyzes the formation of phosphatidylethanolamine (PtdEtn) from phosphatidylserine (PtdSer). This is Phosphatidylserine decarboxylase proenzyme from Fusobacterium nucleatum subsp. nucleatum (strain ATCC 25586 / DSM 15643 / BCRC 10681 / CIP 101130 / JCM 8532 / KCTC 2640 / LMG 13131 / VPI 4355).